A 303-amino-acid chain; its full sequence is Oxygen-dependent coproporphyrinogen-III oxidase (303 aa).

Residue S93 participates in substrate binding. The a divalent metal cation site is built by H97 and H107. The active-site Proton donor is the H107. Residue 109–111 (NVR) coordinates substrate. 2 residues coordinate a divalent metal cation: H146 and H176. Residues 241–276 (YVEFNLVYDRGTLFGLQSGGRTESILMSLPPQVRWG) form an important for dimerization region. 259 to 261 (GGR) contributes to the substrate binding site.

It belongs to the aerobic coproporphyrinogen-III oxidase family. Homodimer. Requires a divalent metal cation as cofactor.

It localises to the cytoplasm. The enzyme catalyses coproporphyrinogen III + O2 + 2 H(+) = protoporphyrinogen IX + 2 CO2 + 2 H2O. Its pathway is porphyrin-containing compound metabolism; protoporphyrin-IX biosynthesis; protoporphyrinogen-IX from coproporphyrinogen-III (O2 route): step 1/1. Involved in the heme biosynthesis. Catalyzes the aerobic oxidative decarboxylation of propionate groups of rings A and B of coproporphyrinogen-III to yield the vinyl groups in protoporphyrinogen-IX. The sequence is that of Oxygen-dependent coproporphyrinogen-III oxidase from Pseudomonas putida (strain ATCC 700007 / DSM 6899 / JCM 31910 / BCRC 17059 / LMG 24140 / F1).